We begin with the raw amino-acid sequence, 273 residues long: Putative pyruvate, phosphate dikinase regulatory protein (273 aa).

149–156 (GPSRTSKT) lines the ADP pocket.

Belongs to the pyruvate, phosphate/water dikinase regulatory protein family. PDRP subfamily.

The catalysed reaction is N(tele)-phospho-L-histidyl/L-threonyl-[pyruvate, phosphate dikinase] + ADP = N(tele)-phospho-L-histidyl/O-phospho-L-threonyl-[pyruvate, phosphate dikinase] + AMP + H(+). It catalyses the reaction N(tele)-phospho-L-histidyl/O-phospho-L-threonyl-[pyruvate, phosphate dikinase] + phosphate + H(+) = N(tele)-phospho-L-histidyl/L-threonyl-[pyruvate, phosphate dikinase] + diphosphate. Functionally, bifunctional serine/threonine kinase and phosphorylase involved in the regulation of the pyruvate, phosphate dikinase (PPDK) by catalyzing its phosphorylation/dephosphorylation. This Rickettsia rickettsii (strain Iowa) protein is Putative pyruvate, phosphate dikinase regulatory protein.